A 487-amino-acid chain; its full sequence is NADH-quinone oxidoreductase subunit N (487 aa).

14 helical membrane passes run 8–28 (LLAL…MLAI), 37–57 (AFVV…IVMA), 71–91 (GYAV…CTFG), 104–124 (EFYL…GSRH), 125–145 (LASL…LVGY), 159–179 (YMVL…LLYA), 203–223 (LMGG…LAPF), 235–255 (PAPV…CVLL), 269–289 (IHWL…LLAL), 303–323 (ISHF…QMPV), 327–347 (GVYL…ISMM), 374–394 (AVLT…GFIG), 408–427 (WWLS…YYLR), and 449–469 (AITS…ALGL).

This sequence belongs to the complex I subunit 2 family. NDH-1 is composed of 14 different subunits. Subunits NuoA, H, J, K, L, M, N constitute the membrane sector of the complex.

The protein localises to the cell inner membrane. The enzyme catalyses a quinone + NADH + 5 H(+)(in) = a quinol + NAD(+) + 4 H(+)(out). NDH-1 shuttles electrons from NADH, via FMN and iron-sulfur (Fe-S) centers, to quinones in the respiratory chain. The immediate electron acceptor for the enzyme in this species is believed to be ubiquinone. Couples the redox reaction to proton translocation (for every two electrons transferred, four hydrogen ions are translocated across the cytoplasmic membrane), and thus conserves the redox energy in a proton gradient. This is NADH-quinone oxidoreductase subunit N from Aeromonas hydrophila subsp. hydrophila (strain ATCC 7966 / DSM 30187 / BCRC 13018 / CCUG 14551 / JCM 1027 / KCTC 2358 / NCIMB 9240 / NCTC 8049).